A 750-amino-acid chain; its full sequence is Photosystem I P700 chlorophyll a apoprotein A1 (750 aa).

The next 8 helical transmembrane spans lie at 70-93, 156-179, 195-219, 291-309, 346-369, 385-411, 433-455, and 531-549; these read VFSA…FHGA, LYCT…FHYH, LNHH…HVSL, IAHH…GHMY, WHAQ…HHMY, LSLF…IFMV, AIIS…LYIH, and FLVH…LILL. Positions 573 and 582 each coordinate [4Fe-4S] cluster. A run of 2 helical transmembrane segments spans residues 589-610 and 664-686; these read HVFL…HFSW and LSAY…MFLF. His675 lines the chlorophyll a' pocket. Met683 and Tyr691 together coordinate chlorophyll a. Phylloquinone is bound at residue Trp692. The chain crosses the membrane as a helical span at residues 724–744; that stretch reads AVGVTHYLLGGIATTWAFFLA.

Belongs to the PsaA/PsaB family. In terms of assembly, the PsaA/B heterodimer binds the P700 chlorophyll special pair and subsequent electron acceptors. PSI consists of a core antenna complex that captures photons, and an electron transfer chain that converts photonic excitation into a charge separation. The eukaryotic PSI reaction center is composed of at least 11 subunits. It depends on P700 is a chlorophyll a/chlorophyll a' dimer, A0 is one or more chlorophyll a, A1 is one or both phylloquinones and FX is a shared 4Fe-4S iron-sulfur center. as a cofactor.

The protein localises to the plastid. The protein resides in the chloroplast thylakoid membrane. The enzyme catalyses reduced [plastocyanin] + hnu + oxidized [2Fe-2S]-[ferredoxin] = oxidized [plastocyanin] + reduced [2Fe-2S]-[ferredoxin]. Functionally, psaA and PsaB bind P700, the primary electron donor of photosystem I (PSI), as well as the electron acceptors A0, A1 and FX. PSI is a plastocyanin-ferredoxin oxidoreductase, converting photonic excitation into a charge separation, which transfers an electron from the donor P700 chlorophyll pair to the spectroscopically characterized acceptors A0, A1, FX, FA and FB in turn. Oxidized P700 is reduced on the lumenal side of the thylakoid membrane by plastocyanin. This chain is Photosystem I P700 chlorophyll a apoprotein A1, found in Saccharum hybrid (Sugarcane).